The following is a 273-amino-acid chain: Vitamin B12-binding protein (273 aa).

An N-terminal signal peptide occupies residues 1–18 (MMKTLSSLLLLFSVSLQA). One can recognise a Fe/B12 periplasmic-binding domain in the interval 23-273 (RVISLAPHAT…EHFASIEQKR (251 aa)). Cys183 and Cys263 are oxidised to a cystine.

The protein belongs to the BtuF family. In terms of assembly, the complex is composed of two ATP-binding proteins (BtuD), two transmembrane proteins (BtuC) and a solute-binding protein (BtuF).

It is found in the periplasm. In terms of biological role, part of the ABC transporter complex BtuCDF involved in vitamin B12 import. Binds vitamin B12 and delivers it to the periplasmic surface of BtuC. In Vibrio vulnificus (strain YJ016), this protein is Vitamin B12-binding protein.